The following is a 71-amino-acid chain: Cytochrome c oxidase subunit 7, mitochondrial (71 aa).

Over 1-35 (MPGLVNAPNHVPEKQRYYQQAFKNHTRLWKIGPRS) the chain is Mitochondrial matrix. Residues 36–58 (GIIMTTFNIAMWGTFGASMYAMS) form a helical membrane-spanning segment. Residues 59–71 (RKVLGYNTWFSED) lie on the Mitochondrial intermembrane side of the membrane.

The protein belongs to the cytochrome c oxidase VIIa family. In terms of assembly, component of the cytochrome c oxidase (complex IV, CIV), a multisubunit enzyme composed of 11 subunits. The complex is composed of a catalytic core of 3 subunits Cox1, Cox2 and Cox3, encoded in the mitochondrial DNA, and 8 supernumerary subunits Cox4, Cox5a/Cox5, Cox6, Cox7, Cox8, Cox7a/Cox9, Cox6b/Cox12 and Cox6a/Cox13, which are encoded in the nuclear genome. The complex exists as a monomer or a dimer and forms respiratory supercomplexes (SCs) in the inner mitochondrial membrane with NADH-ubiquinone oxidoreductase (complex I, CI) and ubiquinol-cytochrome c oxidoreductase (cytochrome b-c1 complex, complex III, CIII), resulting in various different assemblies (supercomplexes I(1)IV(1), I(1)III(3)IV(2), III(2)IV(1) and III(2)IV(2) as well as larger supercomplexes of compositions like I(1)III(2)IV(5-6)).

Its subcellular location is the mitochondrion inner membrane. The protein operates within energy metabolism; oxidative phosphorylation. Component of the cytochrome c oxidase, the last enzyme in the mitochondrial electron transport chain which drives oxidative phosphorylation. The respiratory chain contains 3 multisubunit complexes succinate dehydrogenase (complex II, CII), ubiquinol-cytochrome c oxidoreductase (cytochrome b-c1 complex, complex III, CIII) and cytochrome c oxidase (complex IV, CIV), that cooperate to transfer electrons derived from NADH and succinate to molecular oxygen, creating an electrochemical gradient over the inner membrane that drives transmembrane transport and the ATP synthase. Cytochrome c oxidase is the component of the respiratory chain that catalyzes the reduction of oxygen to water. Electrons originating from reduced cytochrome c in the intermembrane space (IMS) are transferred via the dinuclear copper A center (CU(A)) of Cox2 and heme A of Cox1 to the active site in Cox1, a binuclear center (BNC) formed by heme A3 and copper B (CU(B)). The BNC reduces molecular oxygen to 2 water molecules using 4 electrons from cytochrome c in the IMS and 4 protons from the mitochondrial matrix. The protein is Cytochrome c oxidase subunit 7, mitochondrial of Neurospora crassa (strain ATCC 24698 / 74-OR23-1A / CBS 708.71 / DSM 1257 / FGSC 987).